The sequence spans 188 residues: Protein ORFV073 (188 aa).

In terms of assembly, interacts with host IKBKG; this interaction inhibits host NF-kappa-B pathway activation.

The protein localises to the host nucleus. It is found in the host cytoplasm. Its subcellular location is the host perinuclear region. The protein resides in the virion. In terms of biological role, plays a role in the inhibition of the host NF-kappa-B pathway early during infection. Prevents the host RELA subunit from reaching the nucleus and activate transcription. The protein is Protein ORFV073 of Capra hircus (Goat).